The following is a 621-amino-acid chain: Phosphoenolpyruvate carboxykinase [GTP] (621 aa).

Substrate contacts are provided by residues R82 and 220–222; that span reads YGG. Mn(2+) contacts are provided by K229 and H249. Residue S271 coordinates substrate. Position 272-277 (272-277) interacts with GTP; sequence QCGKTN. C273 is a catalytic residue. D296 provides a ligand contact to Mn(2+). 386 to 388 contacts substrate; it reads NSR. Residues R388, R419, and 514 to 517 contribute to the GTP site; that span reads FGEN.

This sequence belongs to the phosphoenolpyruvate carboxykinase [GTP] family. As to quaternary structure, monomer. The cofactor is Mn(2+).

Its subcellular location is the cytoplasm. It carries out the reaction oxaloacetate + GTP = phosphoenolpyruvate + GDP + CO2. It participates in carbohydrate biosynthesis; gluconeogenesis. In terms of biological role, catalyzes the conversion of oxaloacetate (OAA) to phosphoenolpyruvate (PEP), the rate-limiting step in the metabolic pathway that produces glucose from lactate and other precursors derived from the citric acid cycle. The chain is Phosphoenolpyruvate carboxykinase [GTP] from Corynebacterium kroppenstedtii (strain DSM 44385 / JCM 11950 / CIP 105744 / CCUG 35717).